Consider the following 39-residue polypeptide: Photosystem I reaction center subunit IX (39 aa).

The chain crosses the membrane as a helical span at residues 4 to 24 (FLTTAPVVAAIWFTLTAGILI).

It belongs to the PsaJ family.

The protein localises to the cellular thylakoid membrane. In terms of biological role, may help in the organization of the PsaE and PsaF subunits. In Synechococcus sp. (strain CC9311), this protein is Photosystem I reaction center subunit IX.